The sequence spans 164 residues: Endoribonuclease YbeY (164 aa).

Residues His-132, His-136, and His-142 each coordinate Zn(2+).

It belongs to the endoribonuclease YbeY family. Requires Zn(2+) as cofactor.

It localises to the cytoplasm. Its function is as follows. Single strand-specific metallo-endoribonuclease involved in late-stage 70S ribosome quality control and in maturation of the 3' terminus of the 16S rRNA. The chain is Endoribonuclease YbeY from Clostridium kluyveri (strain NBRC 12016).